The chain runs to 403 residues: Argininosuccinate synthase (403 aa).

ATP contacts are provided by residues alanine 10–serine 18 and alanine 38. Tyrosine 89 is a binding site for L-citrulline. Glycine 119 is a binding site for ATP. L-aspartate contacts are provided by threonine 121, asparagine 125, and aspartate 126. Asparagine 125 contributes to the L-citrulline binding site. L-citrulline-binding residues include arginine 129, serine 177, serine 186, glutamate 262, and tyrosine 274.

The protein belongs to the argininosuccinate synthase family. Type 1 subfamily. In terms of assembly, homotetramer.

Its subcellular location is the cytoplasm. It carries out the reaction L-citrulline + L-aspartate + ATP = 2-(N(omega)-L-arginino)succinate + AMP + diphosphate + H(+). It participates in amino-acid biosynthesis; L-arginine biosynthesis; L-arginine from L-ornithine and carbamoyl phosphate: step 2/3. The polypeptide is Argininosuccinate synthase (Synechococcus sp. (strain CC9605)).